Consider the following 210-residue polypeptide: MDKELLQSTVRKVLDEMRQRPIPLGVSNRHIHLSAQDYERLFPGHPISEKKALLQPGQYAAEQTVTLVGPKGQLKNVRLLGPLRSVSQVEISRTDARTLGIAAPLRMSGNLKGTPGIRLVSPFAELELPSGVIVAQRHIHMSPLDALILRVSHGDMVSVAIEGDDRGLIFNNVAIRVSPDMRLEMHIDTDEANAAGADNPHAFARLVGPR.

26 to 28 serves as a coordination point for CoA; the sequence is VSN. 2 residues coordinate Zn(2+): histidine 30 and histidine 32. CoA-binding residues include lysine 71 and arginine 78. Arginine 84 is a phosphate binding site. Zn(2+) is bound by residues glutamate 90, histidine 138, histidine 140, and histidine 186. Asparagine 193 lines the CoA pocket.

It belongs to the PduL family. Monomer, when purified in the absence of the encapsulation peptide (EP, residues 1-27). The EP may influence oligomerization. The cofactor is Zn(2+).

It is found in the bacterial microcompartment. It catalyses the reaction propanoyl-CoA + phosphate = propanoyl phosphate + CoA. Its pathway is polyol metabolism; 1,2-propanediol degradation. In terms of biological role, involved in 1,2-propanediol (1,2-PD) utilization in the bacterial microcompartment (BMC) dedicated to 1,2-PD degradation by catalyzing the conversion of propanoyl-CoA to propanoyl-phosphate. Also able to catalyze the reverse reaction. Also has phosphate acetyltransferase activity to a lesser extent. Required for optimal growth on 1,2-PD when the BMC is intact. CoA is regenerated within the BMC (for use by PduP) via this enzyme, although there must also be cofactor transport across the BMC. Directly targeted to the BMC. Functionally, the 1,2-PD-specific bacterial microcompartment (BMC) concentrates low levels of 1,2-PD catabolic enzymes, concentrates volatile reaction intermediates thus enhancing pathway flux and keeps the level of toxic, mutagenic propionaldehyde low. This Salmonella typhimurium (strain LT2 / SGSC1412 / ATCC 700720) protein is Phosphate propanoyltransferase.